Reading from the N-terminus, the 136-residue chain is Transmembrane protein 203 (136 aa).

Helical transmembrane passes span 14–34 (FAQL…VLLA), 50–72 (FIPF…VRLF), 81–101 (VLRL…EMLL), and 112–132 (LWYG…MIRA).

It is found in the endoplasmic reticulum membrane. Its subcellular location is the endoplasmic reticulum-Golgi intermediate compartment. Functionally, involved in the regulation of cellular calcium homeotasis. May act as a regulator of STING-mediated inflammatory signaling in macrophages. The sequence is that of Transmembrane protein 203 (tmem203) from Xenopus laevis (African clawed frog).